Consider the following 1064-residue polypeptide: Isoleucine--tRNA ligase, cytoplasmic (1064 aa).

Positions 42 to 52 (PFATGRPHHGH) match the 'HIGH' region motif. The 'KMSKS' region signature appears at 597-601 (KMSKR). Residue Lys600 participates in ATP binding.

This sequence belongs to the class-I aminoacyl-tRNA synthetase family.

The protein localises to the cytoplasm. The enzyme catalyses tRNA(Ile) + L-isoleucine + ATP = L-isoleucyl-tRNA(Ile) + AMP + diphosphate. In Schizosaccharomyces pombe (strain 972 / ATCC 24843) (Fission yeast), this protein is Isoleucine--tRNA ligase, cytoplasmic (irs1).